The primary structure comprises 430 residues: MALLHSGRALPGIAAAFHPGLAAAASARASSWWTHVEMGPPDPILGVTEAFKRDTNSKKMNLGVGAYRDDNGKPYVLPSVRKAEAQIAAKNLDKEYLPIGGLAEFCKASAELALGENSEVLKSGRFVTVQTISGTGALRIGASFLQRFFKFSRDVFLPKPSWGNHTPIFRDAGMQLQGYRYYDPKTCGFDFTGAVEDISKIPEQSVLLLHACAHNPTGVDPRPEQWKEIATVVKKRNLFAFFDMAYQGFASGDGDKDAWAVRHFIEQGINVCLCQSYAKNMGLYGERVGAFTMVCKDADEAKRVESQLKILIRPMYSNPPLNGARIAAAILNTPDLRKQWLQEVKGMADRIIGMRTQLVSNLKKEGSTHNWQHITDQIGMFCFTGLKPEQVERLIKEFSIYMTKDGRISVAGVTSSNVGYLAHAIHQVTK.

Residues 1-29 (MALLHSGRALPGIAAAFHPGLAAAASARA) constitute a mitochondrion transit peptide. Position 48 is a phosphothreonine (Thr48). Lys59 carries the post-translational modification N6-acetyllysine. Gly65 provides a ligand contact to substrate. Lys73 carries the post-translational modification N6-acetyllysine; alternate. N6-succinyllysine; alternate is present on Lys73. At Lys82 the chain carries N6-acetyllysine. N6-acetyllysine; alternate is present on Lys90. Lys90 is subject to N6-succinyllysine; alternate. Tyr96 is modified (3'-nitrotyrosine; alternate). Tyr96 carries the post-translational modification Phosphotyrosine; alternate. N6-acetyllysine; alternate occurs at positions 107 and 122. An N6-succinyllysine; alternate mark is found at Lys107 and Lys122. Position 143 is a phosphoserine (Ser143). Position 159 is an N6-acetyllysine; alternate (Lys159). Position 159 is an N6-succinyllysine; alternate (Lys159). Trp162 serves as a coordination point for substrate. N6-acetyllysine; alternate is present on Lys185. Lys185 carries the post-translational modification N6-succinyllysine; alternate. Asn215 is a substrate binding site. Residue Lys227 is modified to N6-succinyllysine. An N6-acetyllysine modification is found at Lys234. Lys279 and Lys296 each carry N6-acetyllysine; alternate. At Lys279 the chain carries N6-(pyridoxal phosphate)lysine; alternate. At Lys296 the chain carries N6-succinyllysine; alternate. Lys302 is subject to N6-acetyllysine. An N6-acetyllysine; alternate modification is found at Lys309. Position 309 is an N6-succinyllysine; alternate (Lys309). Arg313 carries the asymmetric dimethylarginine modification. A Phosphothreonine modification is found at Thr333. Lys338 is subject to N6-acetyllysine; alternate. Residue Lys338 is modified to N6-succinyllysine; alternate. Lys345 carries the N6-acetyllysine modification. The residue at position 363 (Lys363) is an N6-acetyllysine; alternate. Lys363 is subject to N6-succinyllysine; alternate. N6-acetyllysine is present on residues Lys364 and Lys387. Lys396 and Lys404 each carry N6-acetyllysine; alternate. N6-succinyllysine; alternate is present on residues Lys396 and Lys404. Arg407 is a substrate binding site.

It belongs to the class-I pyridoxal-phosphate-dependent aminotransferase family. In terms of assembly, homodimer. The cofactor is pyridoxal 5'-phosphate.

The protein localises to the mitochondrion matrix. Its subcellular location is the cell membrane. It carries out the reaction L-aspartate + 2-oxoglutarate = oxaloacetate + L-glutamate. The catalysed reaction is L-kynurenine + 2-oxoglutarate = kynurenate + L-glutamate + H2O. In terms of biological role, catalyzes the irreversible transamination of the L-tryptophan metabolite L-kynurenine to form kynurenic acid (KA). As a member of the malate-aspartate shuttle, it has a key role in the intracellular NAD(H) redox balance. Is important for metabolite exchange between mitochondria and cytosol, and for amino acid metabolism. Facilitates cellular uptake of long-chain free fatty acids. This chain is Aspartate aminotransferase, mitochondrial (GOT2), found in Pongo abelii (Sumatran orangutan).